A 261-amino-acid polypeptide reads, in one-letter code: Indole-3-glycerol phosphate synthase (261 aa).

Belongs to the TrpC family.

The enzyme catalyses 1-(2-carboxyphenylamino)-1-deoxy-D-ribulose 5-phosphate + H(+) = (1S,2R)-1-C-(indol-3-yl)glycerol 3-phosphate + CO2 + H2O. The protein operates within amino-acid biosynthesis; L-tryptophan biosynthesis; L-tryptophan from chorismate: step 4/5. The protein is Indole-3-glycerol phosphate synthase of Campylobacter hominis (strain ATCC BAA-381 / DSM 21671 / CCUG 45161 / LMG 19568 / NCTC 13146 / CH001A).